The primary structure comprises 430 residues: UDP-N-acetylmuramoylalanine--D-glutamate ligase (430 aa).

109-115 (GTDGKST) serves as a coordination point for ATP.

Belongs to the MurCDEF family.

Its subcellular location is the cytoplasm. It carries out the reaction UDP-N-acetyl-alpha-D-muramoyl-L-alanine + D-glutamate + ATP = UDP-N-acetyl-alpha-D-muramoyl-L-alanyl-D-glutamate + ADP + phosphate + H(+). Its pathway is cell wall biogenesis; peptidoglycan biosynthesis. Functionally, cell wall formation. Catalyzes the addition of glutamate to the nucleotide precursor UDP-N-acetylmuramoyl-L-alanine (UMA). The protein is UDP-N-acetylmuramoylalanine--D-glutamate ligase of Thermotoga petrophila (strain ATCC BAA-488 / DSM 13995 / JCM 10881 / RKU-1).